Here is a 190-residue protein sequence, read N- to C-terminus: MRIGILAGSFNPVHIGHLAIANYLAEYEGYDKIWFLITPQNPLKNEGELMNQNLRLRLLQKSIKDYNRFEICTIEWGMPRPSYTIDVLWKLHLDFPQNIFELIIGSDNWIIFHHWKDYRTILENFKILVYPRSNYKSIYFNHPNIYFCKDAPQIEISSAFIRKSIVEGKDIRFYMPEGVCREVVNNLFRP.

This sequence belongs to the NadD family.

It catalyses the reaction nicotinate beta-D-ribonucleotide + ATP + H(+) = deamido-NAD(+) + diphosphate. It participates in cofactor biosynthesis; NAD(+) biosynthesis; deamido-NAD(+) from nicotinate D-ribonucleotide: step 1/1. In terms of biological role, catalyzes the reversible adenylation of nicotinate mononucleotide (NaMN) to nicotinic acid adenine dinucleotide (NaAD). The protein is Probable nicotinate-nucleotide adenylyltransferase of Azobacteroides pseudotrichonymphae genomovar. CFP2.